Reading from the N-terminus, the 442-residue chain is UPF0489 protein C5orf22 (442 aa).

A disordered region spans residues serine 175–arginine 210. Positions asparagine 189–glutamate 200 are enriched in polar residues.

Belongs to the UPF0489 family.

The polypeptide is UPF0489 protein C5orf22 (C5orf22) (Homo sapiens (Human)).